Consider the following 189-residue polypeptide: Large ribosomal subunit protein uL6 (189 aa).

This sequence belongs to the universal ribosomal protein uL6 family. Part of the 50S ribosomal subunit.

Functionally, this protein binds to the 23S rRNA, and is important in its secondary structure. It is located near the subunit interface in the base of the L7/L12 stalk, and near the tRNA binding site of the peptidyltransferase center. This chain is Large ribosomal subunit protein uL6, found in Microcystis aeruginosa (strain NIES-843 / IAM M-2473).